Reading from the N-terminus, the 413-residue chain is Prophage integrase IntA (413 aa).

Positions 105–186 (NTFLLVAERW…RINEVMIYAQ (82 aa)) constitute a Core-binding (CB) domain. The region spanning 209-386 (KNMPSIRPDQ…DYLEQRRPMM (178 aa)) is the Tyr recombinase domain. Active-site residues include R248, K275, H337, R340, and H363. The active-site O-(3'-phospho-DNA)-tyrosine intermediate is Y373.

This sequence belongs to the 'phage' integrase family.

Integrase is necessary for integration of the phage into the host genome by site-specific recombination. In conjunction with excisionase, integrase is also necessary for excision of the prophage from the host genome. Part of the cryptic P4-like prophage CP4-57, it excises the prophage when overexpressed, which also requires integration host factor (encoded by ihfA and ihfB). Overexpression of AlpA leads to excision of the CP4-57 prophage, which inactivates ssrA (the gene upstream of the prophage) that encodes tmRNA which is required to rescue stalled ribosomes in a process known as trans-translation. The chain is Prophage integrase IntA (intA) from Escherichia coli (strain K12).